The following is an 83-amino-acid chain: MSSGGLLLLLGLLTLWEVLTPVSSKDRPEFCELPADPGPCNALSQAYYNAVQHKCLKFRYGGCKANPNTFKTIEECKRTCAGK.

The N-terminal stretch at 1–24 is a signal peptide; the sequence is MSSGGLLLLLGLLTLWEVLTPVSS. In terms of domain architecture, BPTI/Kunitz inhibitor spans 31-80; the sequence is CELPADPGPCNALSQAYYNAVQHKCLKFRYGGCKANPNTFKTIEECKRTC. 3 disulfide bridges follow: C31-C80, C40-C63, and C55-C76.

Its subcellular location is the secreted. Serine protease inhibitor. This Hoplocephalus stephensii (Stephens's banded snake) protein is Stephenin-3.